A 204-amino-acid chain; its full sequence is Phosphoribosyl-dephospho-CoA transferase (204 aa).

Active-site residues include D129 and D131.

Belongs to the MdcG family.

It catalyses the reaction apo-[malonate decarboxylase ACP] + 2'-(5''-triphospho-alpha-D-ribosyl)-3'-dephospho-CoA = holo-[malonate decarboxylase ACP] + diphosphate. In terms of biological role, transfers 2'-(5-triphosphoribosyl)-3'-dephosphocoenzyme-A to the apo-[acyl-carrier-protein] of the malonate decarboxylase to yield holo-[acyl-carrier-protein]. The chain is Phosphoribosyl-dephospho-CoA transferase from Pseudomonas putida (strain GB-1).